Here is a 203-residue protein sequence, read N- to C-terminus: Outer-membrane lipoprotein carrier protein (203 aa).

The first 21 residues, 1–21 (MKKLAITCALLSGMVVSQVWA), serve as a signal peptide directing secretion. Residues 184–203 (DASKFTFTPPKGVTVDDQRK) form a disordered region.

It belongs to the LolA family. Monomer.

The protein resides in the periplasm. Its function is as follows. Participates in the translocation of lipoproteins from the inner membrane to the outer membrane. Only forms a complex with a lipoprotein if the residue after the N-terminal Cys is not an aspartate (The Asp acts as a targeting signal to indicate that the lipoprotein should stay in the inner membrane). This is Outer-membrane lipoprotein carrier protein from Klebsiella pneumoniae (strain 342).